The chain runs to 215 residues: Large ribosomal subunit protein uL4 (215 aa).

Positions 51 to 88 (KGMGEVSGTTKKPYRQKGTGNARQGSLRAPQFRTGGAV) are disordered.

The protein belongs to the universal ribosomal protein uL4 family. Part of the 50S ribosomal subunit.

In terms of biological role, one of the primary rRNA binding proteins, this protein initially binds near the 5'-end of the 23S rRNA. It is important during the early stages of 50S assembly. It makes multiple contacts with different domains of the 23S rRNA in the assembled 50S subunit and ribosome. Forms part of the polypeptide exit tunnel. This is Large ribosomal subunit protein uL4 from Granulibacter bethesdensis (strain ATCC BAA-1260 / CGDNIH1).